A 456-amino-acid chain; its full sequence is MSISDHPRVYGTVALTAAFAAGILVTLGFKDCYPELENRYQRRRNRNLSRSNGDYGVVVPTANRVHRESLIFGPVRLEDHEEVTSNINSSFDWVEGIEGCIGNTPLVMIRSLSEATGCVILAKAELLNGAGGSPKDRVALNMIQDAEERGLLVPGRGDTIYEGTVGSTGISLATLARAKGYKCHICMPNDMAIEKSQLLHHLGATVERVDPAPITSPDHFVNLARRRAREHEAVHADGSVGFFADQFESTANYQAHVKTTGPEIYRQTGGQLDAFVAGAGTGGTIAGVAKYLKEEKNLWETRVVLADPQGSGLFNKIRHGVMYSSTEREGTRRRQQVDTMVEGIGINRITENFESGRVLIDDAVRVTDEQACRMARWLVEHDGIFCGSSTAVNCVAAVVTAMKLPRGSRVVTLLCDSGNRHLSKFWKHIGDMGLENDTQAQAEDLFAELGLEELKR.

The helical transmembrane segment at 9-29 threads the bilayer; it reads VYGTVALTAAFAAGILVTLGF.

Belongs to the cysteine synthase/cystathionine beta-synthase family. Requires pyridoxal 5'-phosphate as cofactor.

The protein resides in the mitochondrion outer membrane. It catalyses the reaction O-acetyl-L-serine + hydrogen sulfide = L-cysteine + acetate. Its function is as follows. Putative cysteine synthase that catalyzes the conversion of O-acetyl-L-serine (OAS) into cysteine, the last step in the cysteine biosynthesis pathway. However, in contrast to cysteine synthase cys-17, this CS-like protein may not function in cysteine biosynthesis. The chain is Cysteine synthase 2 from Neurospora crassa (strain ATCC 24698 / 74-OR23-1A / CBS 708.71 / DSM 1257 / FGSC 987).